The primary structure comprises 172 residues: ATP-dependent kinase-like protein notR' (172 aa).

It belongs to the YFH7 family.

ATP-dependent kinase-like protein; part of the gene cluster that mediates the biosynthesis of notoamide, a fungal indole alkaloid that belongs to a family of natural products containing a characteristic bicyclo[2.2.2]diazaoctane core. The first step of notoamide biosynthesis involves coupling of L-proline and L-tryptophan by the bimodular NRPS notE', to produce cyclo-L-tryptophan-L-proline called brevianamide F. The reverse prenyltransferase notF' then acts as a deoxybrevianamide E synthase and converts brevianamide F to deoxybrevianamide E via reverse prenylation at C-2 of the indole ring leading to the bicyclo[2.2.2]diazaoctane core. Deoxybrevianamide E is further hydroxylated at C-6 of the indole ring, likely catalyzed by the cytochrome P450 monooxygenase notG', to yield 6-hydroxy-deoxybrevianamide E. 6-hydroxy-deoxybrevianamide E is a specific substrate of the prenyltransferase notC' for normal prenylation at C-7 to produce 6-hydroxy-7-prenyl-deoxybrevianamide, also called notoamide S. As the proposed pivotal branching point in notoamide biosynthesis, notoamide S can be diverted to notoamide E through an oxidative pyran ring closure putatively catalyzed by either notH' cytochrome P450 monooxygenase or the notD' FAD-linked oxidoreductase. This step would be followed by an indole 2,3-epoxidation-initiated pinacol-like rearrangement catalyzed by the notB' FAD-dependent monooxygenase leading to the formation of notoamide C and notoamide D. On the other hand notoamide S is converted to notoamide T by notH' (or notD'), a bifunctional oxidase that also functions as the intramolecular Diels-Alderase responsible for generation of (-)-notoamide T. To generate antipodal (+)-notoaminide T, notH (or notD) in Aspergillus strain MF297-2 is expected to catalyze a Diels-Alder reaction leading to the opposite stereochemistry. The remaining oxidoreductase notD' (or notH') likely catalyzes the oxidative pyran ring formation to yield (-)-stephacidin A. The FAD-dependent monooxygenase notI' is highly similar to notB' and is predicted to catalyze a similar conversion from (-)-stephacidin A to (+)-notoamide B via the 2,3-epoxidation of (-)-stephacidin A followed by a pinacol-type rearrangement. Finally, it remains unclear which enzyme could be responsible for the final hydroxylation steps leading to notoamide A and sclerotiamide. The function of notQ' in the notoamide biosynthesis has not been determined yet. In Aspergillus versicolor, this protein is ATP-dependent kinase-like protein notR'.